We begin with the raw amino-acid sequence, 213 residues long: Achelase-1 (213 aa).

In terms of domain architecture, Peptidase S1 spans 1–213 (IVGGSVTTIG…RYTSWIQSNA (213 aa)). The cysteines at positions 26 and 42 are disulfide-linked. Residues His-41 and Asp-86 each act as charge relay system in the active site. A disulfide bridge connects residues Cys-155 and Cys-172. The active-site Charge relay system is the Ser-188.

The protein belongs to the peptidase S1 family. Hemolymph and saliva of the larval form (caterpillar).

It localises to the secreted. The protein resides in the extracellular space. Its activity is regulated as follows. Sensitive to serine proteinase inhibitors and thiol proteinase inhibitors. Functionally, fibrinolytic activity; shows preferential cleavage of Arg-Gly bonds in all three fibrinogen chains. Contact with the caterpillars causes severe bleeding, due the anticoagulant effect of the protein. The polypeptide is Achelase-1 (Lonomia achelous (Giant silkworm moth)).